Consider the following 470-residue polypeptide: Cysteine--tRNA ligase (470 aa).

Residue C28 participates in Zn(2+) binding. A 'HIGH' region motif is present at residues 30-40; that stretch reads PTVYNYIHIGN. The Zn(2+) site is built by C211, H236, and E240. Residues 270–274 carry the 'KMSKS' region motif; sequence KMSKS. K273 contributes to the ATP binding site.

The protein belongs to the class-I aminoacyl-tRNA synthetase family. In terms of assembly, monomer. Requires Zn(2+) as cofactor.

It localises to the cytoplasm. It catalyses the reaction tRNA(Cys) + L-cysteine + ATP = L-cysteinyl-tRNA(Cys) + AMP + diphosphate. The polypeptide is Cysteine--tRNA ligase (Enterococcus faecalis (strain ATCC 700802 / V583)).